The sequence spans 887 residues: Alanine--tRNA ligase (887 aa).

Residues H564, H568, C675, and H679 each contribute to the Zn(2+) site. Positions 851-866 are enriched in gly residues; the sequence is GQGGGGRPDMAQGGGP. The tract at residues 851 to 871 is disordered; it reads GQGGGGRPDMAQGGGPDGDKA.

It belongs to the class-II aminoacyl-tRNA synthetase family. It depends on Zn(2+) as a cofactor.

It localises to the cytoplasm. The catalysed reaction is tRNA(Ala) + L-alanine + ATP = L-alanyl-tRNA(Ala) + AMP + diphosphate. Its function is as follows. Catalyzes the attachment of alanine to tRNA(Ala) in a two-step reaction: alanine is first activated by ATP to form Ala-AMP and then transferred to the acceptor end of tRNA(Ala). Also edits incorrectly charged Ser-tRNA(Ala) and Gly-tRNA(Ala) via its editing domain. The protein is Alanine--tRNA ligase of Rhizorhabdus wittichii (strain DSM 6014 / CCUG 31198 / JCM 15750 / NBRC 105917 / EY 4224 / RW1) (Sphingomonas wittichii).